We begin with the raw amino-acid sequence, 536 residues long: Glycine-rich extracellular protein 1 (536 aa).

An N-terminal signal peptide occupies residues 1 to 22 (MGAWAFPAALFLLCLTSESLQG). Disordered regions lie at residues 111–134 (AQNG…TTQN), 306–336 (GAGE…NGPW), and 500–536 (GDEY…LGKC). Over residues 115-124 (FGPGFGGGGK) the composition is skewed to gly residues. A compositionally biased stretch (gly residues) spans 521–536 (GQLGNGYGGRCPLGKC).

The sequence is that of Glycine-rich extracellular protein 1 from Homo sapiens (Human).